A 242-amino-acid chain; its full sequence is Large ribosomal subunit protein uL30x (242 aa).

This sequence belongs to the universal ribosomal protein uL30 family.

This is Large ribosomal subunit protein uL30x (RPL7C) from Arabidopsis thaliana (Mouse-ear cress).